Reading from the N-terminus, the 68-residue chain is Large ribosomal subunit protein bL32 (68 aa).

The tract at residues 1–24 is disordered; that stretch reads MAVPQNRVTRSRRNMRRSHDALVA.

It belongs to the bacterial ribosomal protein bL32 family.

The sequence is that of Large ribosomal subunit protein bL32 from Paracoccus denitrificans (strain Pd 1222).